The primary structure comprises 80 residues: Exodeoxyribonuclease 7 small subunit (80 aa).

It belongs to the XseB family. Heterooligomer composed of large and small subunits.

Its subcellular location is the cytoplasm. It catalyses the reaction Exonucleolytic cleavage in either 5'- to 3'- or 3'- to 5'-direction to yield nucleoside 5'-phosphates.. Bidirectionally degrades single-stranded DNA into large acid-insoluble oligonucleotides, which are then degraded further into small acid-soluble oligonucleotides. This is Exodeoxyribonuclease 7 small subunit from Photobacterium profundum (strain SS9).